We begin with the raw amino-acid sequence, 316 residues long: Delta(1)-pyrroline-2-carboxylate reductase (316 aa).

It belongs to the ornithine cyclodeaminase/mu-crystallin family. As to quaternary structure, homodimer.

It carries out the reaction L-proline + NAD(+) = 1-pyrroline-2-carboxylate + NADH + H(+). It catalyses the reaction L-proline + NADP(+) = 1-pyrroline-2-carboxylate + NADPH + H(+). In terms of biological role, catalyzes the reduction of Delta(1)-pyrroline-2-carboxylate (Pyr2C) to L-proline, using preferentially NADPH over NADH as the electron donor. Together with LhpH, is involved in a metabolic pathway that converts trans-3-hydroxy-L-proline (t3LHyp) to L-proline. To a much lesser extent, can also reduce Delta(1)-piperideine-2-carboxylate (Pip2C) to L-pipecolate in vitro; however, this activity has likely no physiological significance in vivo since C.psychrerythraea probably possesses no ability to metabolize D-lysine via the L-pipecolate pathway. Does not show ornithine cyclodeaminase (OCD) activity. The chain is Delta(1)-pyrroline-2-carboxylate reductase from Colwellia psychrerythraea (strain 34H / ATCC BAA-681) (Vibrio psychroerythus).